The following is a 538-amino-acid chain: Beta-1,4-mannosyl-glycoprotein 4-beta-N-acetylglucosaminyltransferase (538 aa).

Residues 1-7 are Cytoplasmic-facing; sequence MKMRRYK. The chain crosses the membrane as a helical; Signal-anchor for type II membrane protein span at residues 8–23; the sequence is LFLMFCMAGLCLISFL. The Lumenal segment spans residues 24–538; it reads HFFKTLSYVT…VRGKLDTTEG (515 aa). A disordered region spans residues 121 to 151; that stretch reads GTRMLEKPSPGRTEEKTKVAEGSSVRGPARR. N245, N263, and N401 each carry an N-linked (GlcNAc...) asparagine glycan. The disordered stretch occupies residues 509-538; it reads PKSTVEGGRRNQGSDGRSSAVRGKLDTTEG.

This sequence belongs to the glycosyltransferase 17 family. As to quaternary structure, interacts with MGAT4D.

Its subcellular location is the golgi apparatus membrane. The catalysed reaction is N(4)-{beta-D-GlcNAc-(1-&gt;2)-alpha-D-Man-(1-&gt;3)-[beta-D-GlcNAc-(1-&gt;2)-alpha-D-Man-(1-&gt;6)]-beta-D-Man-(1-&gt;4)-beta-D-GlcNAc-(1-&gt;4)-beta-D-GlcNAc}-L-asparaginyl-[protein] + UDP-N-acetyl-alpha-D-glucosamine = N(4)-{beta-D-GlcNAc-(1-&gt;2)-alpha-D-Man-(1-&gt;3)-[beta-D-GlcNAc-(1-&gt;4)]-[beta-D-GlcNAc-(1-&gt;2)-alpha-D-Man-(1-&gt;6)]-beta-D-Man-(1-&gt;4)-beta-D-GlcNAc-(1-&gt;4)-beta-D-GlcNAc}-L-asparaginyl-[protein] + UDP + H(+). Its pathway is protein modification; protein glycosylation. In terms of biological role, it is involved in the regulation of the biosynthesis and biological function of glycoprotein oligosaccharides. Catalyzes the addition of N-acetylglucosamine in beta 1-4 linkage to the beta-linked mannose of the trimannosyl core of N-linked sugar chains, called bisecting N-acetylglucosamine (GlcNAc). It is one of the most important enzymes involved in the regulation of the biosynthesis of glycoprotein oligosaccharides. The addition of this bisecting GlcNAc residue alters not only the composition, but also the conformation of the N-glycan. The introduction of the bisecting GlcNAc residue results in the suppression of further processing and elongation of N-glycans, precluding the formation of beta-1,6 GlcNAc branching, catalyzed by MGAT5 since it is unable to use the bisected oligosaccharide as a substrate. Addition of bisecting N-acetylglucosamine to CDH1/E-cadherin modulates CDH1 cell membrane location. Inhibits NeuAc-alpha-2,3-Gal-beta-1,4-GlcNAc- formation which modulates sialylation levels and plays a role in cell migration regulation. In brain, addition of bisecting N-acetylglucosamine to BACE1 blocks its lysosomal targeting in response to oxidative stress and further degradation which increases its location to early endosome and the APP cleavage. The protein is Beta-1,4-mannosyl-glycoprotein 4-beta-N-acetylglucosaminyltransferase (Mgat3) of Rattus norvegicus (Rat).